The primary structure comprises 185 residues: Protein GrpE (185 aa).

The interval 1-44 is disordered; it reads MSEEELTNGPGPEPQPEPLEVESAPLEAAPAGEPDKALLEAQQQ.

It belongs to the GrpE family. As to quaternary structure, homodimer.

Its subcellular location is the cytoplasm. Its function is as follows. Participates actively in the response to hyperosmotic and heat shock by preventing the aggregation of stress-denatured proteins, in association with DnaK and GrpE. It is the nucleotide exchange factor for DnaK and may function as a thermosensor. Unfolded proteins bind initially to DnaJ; upon interaction with the DnaJ-bound protein, DnaK hydrolyzes its bound ATP, resulting in the formation of a stable complex. GrpE releases ADP from DnaK; ATP binding to DnaK triggers the release of the substrate protein, thus completing the reaction cycle. Several rounds of ATP-dependent interactions between DnaJ, DnaK and GrpE are required for fully efficient folding. The polypeptide is Protein GrpE (Methylococcus capsulatus (strain ATCC 33009 / NCIMB 11132 / Bath)).